The primary structure comprises 156 residues: Putative pre-16S rRNA nuclease (156 aa).

The protein belongs to the YqgF nuclease family.

Its subcellular location is the cytoplasm. In terms of biological role, could be a nuclease involved in processing of the 5'-end of pre-16S rRNA. This chain is Putative pre-16S rRNA nuclease, found in Ehrlichia chaffeensis (strain ATCC CRL-10679 / Arkansas).